A 226-amino-acid chain; its full sequence is UPF0173 metal-dependent hydrolase Minf_0129 (226 aa).

This sequence belongs to the UPF0173 family.

This Methylacidiphilum infernorum (isolate V4) (Methylokorus infernorum (strain V4)) protein is UPF0173 metal-dependent hydrolase Minf_0129.